The chain runs to 182 residues: Adenine phosphoribosyltransferase (182 aa).

It belongs to the purine/pyrimidine phosphoribosyltransferase family. In terms of assembly, homodimer.

Its subcellular location is the cytoplasm. The catalysed reaction is AMP + diphosphate = 5-phospho-alpha-D-ribose 1-diphosphate + adenine. The protein operates within purine metabolism; AMP biosynthesis via salvage pathway; AMP from adenine: step 1/1. In terms of biological role, catalyzes a salvage reaction resulting in the formation of AMP, that is energically less costly than de novo synthesis. The protein is Adenine phosphoribosyltransferase of Streptomyces coelicolor (strain ATCC BAA-471 / A3(2) / M145).